Here is a 272-residue protein sequence, read N- to C-terminus: uncharacterized protein (272 aa).

The first 20 residues, 1 to 20 (MKLRKIFLLPLISLSTLSVA), serve as a signal peptide directing secretion. Cysteine 21 carries the N-palmitoyl cysteine lipid modification. Cysteine 21 carries S-diacylglycerol cysteine lipidation.

The protein belongs to the MG439/MG440 family.

It is found in the cell membrane. This is an uncharacterized protein from Mycoplasma genitalium (strain ATCC 33530 / DSM 19775 / NCTC 10195 / G37) (Mycoplasmoides genitalium).